Reading from the N-terminus, the 581-residue chain is Arginine--tRNA ligase (581 aa).

The 'HIGH' region motif lies at 122–132; that stretch reads PNVAKPMHVGH.

The protein belongs to the class-I aminoacyl-tRNA synthetase family. In terms of assembly, monomer.

It is found in the cytoplasm. It catalyses the reaction tRNA(Arg) + L-arginine + ATP = L-arginyl-tRNA(Arg) + AMP + diphosphate. The sequence is that of Arginine--tRNA ligase from Francisella tularensis subsp. tularensis (strain WY96-3418).